The chain runs to 291 residues: Probable 2-(5''-triphosphoribosyl)-3'-dephosphocoenzyme-A synthase (291 aa).

It belongs to the CitG/MdcB family.

It catalyses the reaction 3'-dephospho-CoA + ATP = 2'-(5''-triphospho-alpha-D-ribosyl)-3'-dephospho-CoA + adenine. Involved in the formation of 2-(5''-phosphoribosyl)-3'-dephosphocoenzyme-A, the prosthetic group of the acyl-carrier protein of the malonate decarboxylase. In Pseudomonas syringae pv. tomato (strain ATCC BAA-871 / DC3000), this protein is Probable 2-(5''-triphosphoribosyl)-3'-dephosphocoenzyme-A synthase.